A 499-amino-acid chain; its full sequence is Interferon regulatory factor 5 (499 aa).

The Nuclear localization signal signature appears at 12–18; it reads PRRVRLK. Positions 14-122 form a DNA-binding region, IRF tryptophan pentad repeat; that stretch reads RVRLKPWLVA…QPYKVYEVCS (109 aa). A disordered region spans residues 121 to 142; that stretch reads CSNGPAPAESQPSEDNAEEEEE. The Nuclear export signal signature appears at 145–155; it reads LQKMLPGLSIT. 2 positions are modified to phosphoserine; by TBK1: Ser153 and Ser294. Ser302 bears the Phosphoserine mark. Glycyl lysine isopeptide (Lys-Gly) (interchain with G-Cter in ubiquitin) cross-links involve residues Lys412 and Lys413. A phosphoserine mark is found at Ser432, Ser436, Ser438, Ser441, and Ser447.

This sequence belongs to the IRF family. Homodimer, when phosphorylated. Interacts with TASL (via pLxIS motif); interaction takes place downstream of TLR7, TLR8 or TLR9, leading to its activation. Interacts with MYD88 and TRAF6. Post-translationally, phosphorylation of serine and threonine residues by IKBKB in a C-terminal autoinhibitory region, stimulates dimerization, transport into the nucleus, assembly with the coactivator CBP/EP300 and initiation of transcription. 'Lys-63'-linked polyubiquitination by TRAF6 is required for activation.

It is found in the cytoplasm. Its subcellular location is the nucleus. Maintained as a monomer in an autoinhibited state. Phosphorylation and activation follow the following steps: innate adapter protein TASL recruits IRF5, thereby licensing IRF5 for phosphorylation by IKBKB. Phosphorylated IRF5 dissociates from the adapter proteins, dimerizes, and then enters the nucleus to induce IFNs. Its function is as follows. Transcription factor that plays a critical role in innate immunity by activating expression of type I interferon (IFN) IFNA and INFB and inflammatory cytokines downstream of endolysosomal toll-like receptors TLR7, TLR8 and TLR9. Regulates the transcription of type I IFN genes (IFN-alpha and IFN-beta) and IFN-stimulated genes (ISG) by binding to an interferon-stimulated response element (ISRE) in their promoters. Can efficiently activate both the IFN-beta (IFNB) and the IFN-alpha (IFNA) genes and mediate their induction downstream of the TLR-activated, MyD88-dependent pathway. The polypeptide is Interferon regulatory factor 5 (Bos taurus (Bovine)).